The primary structure comprises 111 residues: Secreted RxLR effector protein 81 (111 aa).

Positions 1–16 (MLVSMLLIIFPNGVSL) are cleaved as a signal peptide. N52 carries an N-linked (GlcNAc...) asparagine glycan. The segment at 73–92 (KKFSSSDEDKSRDVRRRLRP) is disordered. A RxLR-dEER motif is present at residues 88-91 (RRLR).

The protein belongs to the RxLR effector family.

Its subcellular location is the secreted. It is found in the host nucleus. The protein resides in the host cytoplasm. In terms of biological role, secreted effector that partially suppresses the host cell death induced by cell death-inducing proteins. This chain is Secreted RxLR effector protein 81, found in Plasmopara viticola (Downy mildew of grapevine).